Consider the following 131-residue polypeptide: Small ribosomal subunit protein uS8 (131 aa).

Belongs to the universal ribosomal protein uS8 family. As to quaternary structure, part of the 30S ribosomal subunit. Contacts proteins S5 and S12.

In terms of biological role, one of the primary rRNA binding proteins, it binds directly to 16S rRNA central domain where it helps coordinate assembly of the platform of the 30S subunit. The protein is Small ribosomal subunit protein uS8 of Campylobacter lari (strain RM2100 / D67 / ATCC BAA-1060).